The following is a 210-amino-acid chain: Na(+)-translocating NADH-quinone reductase subunit D (210 aa).

6 helical membrane passes run 14 to 34 (PIVS…ALAV), 42 to 62 (LVMT…ISIL), 72 to 92 (IIVQ…VLQA), 103 to 123 (VFVG…AYAM), 131 to 151 (FMDG…VGFI), and 178 to 198 (NGLL…IWII).

This sequence belongs to the NqrDE/RnfAE family. In terms of assembly, composed of six subunits; NqrA, NqrB, NqrC, NqrD, NqrE and NqrF.

It localises to the cell inner membrane. It carries out the reaction a ubiquinone + n Na(+)(in) + NADH + H(+) = a ubiquinol + n Na(+)(out) + NAD(+). Functionally, NQR complex catalyzes the reduction of ubiquinone-1 to ubiquinol by two successive reactions, coupled with the transport of Na(+) ions from the cytoplasm to the periplasm. NqrA to NqrE are probably involved in the second step, the conversion of ubisemiquinone to ubiquinol. The polypeptide is Na(+)-translocating NADH-quinone reductase subunit D (Shewanella halifaxensis (strain HAW-EB4)).